The chain runs to 39 residues: MQVNENPNKVPVELNRTSLYLGVLSVLVLGILFSSYFFN.

The chain crosses the membrane as a helical span at residues 18 to 38; that stretch reads SLYLGVLSVLVLGILFSSYFF.

This sequence belongs to the PsbL family. In terms of assembly, PSII is composed of 1 copy each of membrane proteins PsbA, PsbB, PsbC, PsbD, PsbE, PsbF, PsbH, PsbI, PsbJ, PsbK, PsbL, PsbM, PsbT, PsbX, PsbY, Psb30/Ycf12, peripheral proteins PsbO, CyanoQ (PsbQ), PsbU, PsbV and a large number of cofactors. It forms dimeric complexes.

It is found in the cellular thylakoid membrane. In terms of biological role, one of the components of the core complex of photosystem II (PSII). PSII is a light-driven water:plastoquinone oxidoreductase that uses light energy to abstract electrons from H(2)O, generating O(2) and a proton gradient subsequently used for ATP formation. It consists of a core antenna complex that captures photons, and an electron transfer chain that converts photonic excitation into a charge separation. This subunit is found at the monomer-monomer interface and is required for correct PSII assembly and/or dimerization. This Prochlorococcus marinus (strain MIT 9515) protein is Photosystem II reaction center protein L.